The following is a 116-amino-acid chain: Iron-sulfur cluster insertion protein ErpA (116 aa).

Iron-sulfur cluster is bound by residues Cys-44, Cys-108, and Cys-110.

This sequence belongs to the HesB/IscA family. Homodimer. It depends on iron-sulfur cluster as a cofactor.

Its function is as follows. Required for insertion of 4Fe-4S clusters for at least IspG. This Idiomarina loihiensis (strain ATCC BAA-735 / DSM 15497 / L2-TR) protein is Iron-sulfur cluster insertion protein ErpA.